Reading from the N-terminus, the 295-residue chain is Zinc finger transcription factor pqm-1 (295 aa).

Residues 1–23 form a disordered region; it reads MSFLNNDFGSPPATSSPPTTMPK. The segment covering 10–22 has biased composition (low complexity); sequence SPPATSSPPTTMP. A C2H2-type 1; degenerate zinc finger spans residues 161 to 183; it reads YMCTVCRKVYGRYNSVSYHVTIY. A C2H2-type 2 zinc finger spans residues 227–249; that stretch reads RKCPHCRHVSKSPAMLEKHIRRH.

Belongs to the krueppel C2H2-type zinc-finger protein family. In terms of assembly, interacts with ceh-60.

The protein resides in the chromosome. The protein localises to the nucleus. Its subcellular location is the cytoplasm. Its function is as follows. Zinc finger transcription factor which acts as both a transcriptional activator and repressor. Binds to the promoters of genes that contain the 5'-CTTATCA-3' DNA consensus sequence in their regulatory region. Functions downstream of the Insulin/IGF-1-like signaling (IIS) mediated pathway. Involved in normal development, lifespan, stress response, lipid metabolism, innate immunity and exit from the developmentally arrested larval state known as dauer. Required for stress-induced expression of hsp-90 and resistance to heat stress, perhaps as part of a systemic stress signaling pathway. Involved in maintenance of proteostasis. Under hypoxic stress increases lipid levels by positively regulating fatty acid synthesis via fat-7 expression. Associates with homeobox protein ceh-60 at the promoters of some stress-responsive genes to regulate expression; may require phosphorylation for transcriptional repression activity. Acts downstream of nhr-14 to activate transcription of intestinal metal transporter smf-3, modulating innate immunity and iron uptake. May act downstream of the mTORC2 signaling mediated pathway. May act in a mutually exclusive manner with the FOXO transcription factor daf-16. This is Zinc finger transcription factor pqm-1 from Caenorhabditis elegans.